The following is a 638-amino-acid chain: Plasma kallikrein (638 aa).

Residues 1 to 19 (MILFKQVGYFVSLFATVSC) form the signal peptide. Apple domains lie at 21–104 (CLSQ…LKQC), 111–194 (CHQD…LKSC), 201–284 (CPMD…LFTC), and 292–375 (CHFK…LRLC). 18 disulfides stabilise this stretch: Cys21-Cys104, Cys47-Cys77, Cys51-Cys57, Cys111-Cys194, Cys137-Cys166, Cys141-Cys147, Cys201-Cys284, Cys227-Cys256, Cys231-Cys237, Cys292-Cys375, Cys318-Cys347, Cys322-Cys328, Cys340-Cys345, Cys383-Cys503, Cys419-Cys435, Cys517-Cys584, Cys548-Cys563, and Cys574-Cys602. A glycan (N-linked (GlcNAc...) asparagine) is linked at Asn127. Asn215 carries an N-linked (GlcNAc...) asparagine glycan. N-linked (GlcNAc...) asparagine glycosylation occurs at Asn308. Residues 391–626 (IVGGTNSSLG…YIDWILEKIQ (236 aa)) form the Peptidase S1 domain. Asn396 carries an N-linked (GlcNAc...) asparagine glycan. His434 serves as the catalytic Charge relay system. Asn453 carries N-linked (GlcNAc...) asparagine glycosylation. Catalysis depends on Asp483, which acts as the Charge relay system. Asn494 is a glycosylation site (N-linked (GlcNAc...) asparagine). Ser578 (charge relay system) is an active-site residue.

It belongs to the peptidase S1 family. Plasma kallikrein subfamily. In terms of assembly, forms a heterodimer with SERPINA5. The zymogen is activated by factor XIIa, which cleaves the molecule into a light chain, which contains the active site, and a heavy chain, which associates with HMW kininogen. These chains are linked by one or more disulfide bonds.

It is found in the secreted. The enzyme catalyses Cleaves selectively Arg-|-Xaa and Lys-|-Xaa bonds, including Lys-|-Arg and Arg-|-Ser bonds in (human) kininogen to release bradykinin.. With respect to regulation, inhibited by SERPINA5. The enzyme cleaves Lys-Arg and Arg-Ser bonds. It activates, in a reciprocal reaction, factor XII after its binding to a negatively charged surface. It also releases bradykinin from HMW kininogen and may also play a role in the renin-angiotensin system by converting prorenin into renin. In Rattus norvegicus (Rat), this protein is Plasma kallikrein (Klkb1).